We begin with the raw amino-acid sequence, 90 residues long: Small ribosomal subunit protein bS20 (90 aa).

This sequence belongs to the bacterial ribosomal protein bS20 family.

Its function is as follows. Binds directly to 16S ribosomal RNA. The protein is Small ribosomal subunit protein bS20 of Desulfitobacterium hafniense (strain DSM 10664 / DCB-2).